A 361-amino-acid polypeptide reads, in one-letter code: Ribosomal RNA large subunit methyltransferase M (361 aa).

S-adenosyl-L-methionine contacts are provided by residues Ser-187, 220-223 (CPGG), Asp-239, Asp-259, and Asp-276. Lys-305 serves as the catalytic Proton acceptor.

Belongs to the class I-like SAM-binding methyltransferase superfamily. RNA methyltransferase RlmE family. RlmM subfamily. Monomer.

It localises to the cytoplasm. It carries out the reaction cytidine(2498) in 23S rRNA + S-adenosyl-L-methionine = 2'-O-methylcytidine(2498) in 23S rRNA + S-adenosyl-L-homocysteine + H(+). Catalyzes the 2'-O-methylation at nucleotide C2498 in 23S rRNA. The protein is Ribosomal RNA large subunit methyltransferase M of Shewanella amazonensis (strain ATCC BAA-1098 / SB2B).